Reading from the N-terminus, the 193-residue chain is Xanthine phosphoribosyltransferase (193 aa).

Xanthine contacts are provided by Leu-20 and Asn-27. 129 to 133 (ANGKA) contacts 5-phospho-alpha-D-ribose 1-diphosphate. Lys-157 provides a ligand contact to xanthine.

It belongs to the purine/pyrimidine phosphoribosyltransferase family. Xpt subfamily. Homodimer.

The protein resides in the cytoplasm. The catalysed reaction is XMP + diphosphate = xanthine + 5-phospho-alpha-D-ribose 1-diphosphate. It participates in purine metabolism; XMP biosynthesis via salvage pathway; XMP from xanthine: step 1/1. In terms of biological role, converts the preformed base xanthine, a product of nucleic acid breakdown, to xanthosine 5'-monophosphate (XMP), so it can be reused for RNA or DNA synthesis. The chain is Xanthine phosphoribosyltransferase from Bifidobacterium longum subsp. infantis (strain ATCC 15697 / DSM 20088 / JCM 1222 / NCTC 11817 / S12).